Here is a 434-residue protein sequence, read N- to C-terminus: Methylenetetrahydrofolate--tRNA-(uracil-5-)-methyltransferase TrmFO (434 aa).

10–15 (GAGLAG) is an FAD binding site.

The protein belongs to the MnmG family. TrmFO subfamily. FAD serves as cofactor.

The protein localises to the cytoplasm. It carries out the reaction uridine(54) in tRNA + (6R)-5,10-methylene-5,6,7,8-tetrahydrofolate + NADH + H(+) = 5-methyluridine(54) in tRNA + (6S)-5,6,7,8-tetrahydrofolate + NAD(+). The catalysed reaction is uridine(54) in tRNA + (6R)-5,10-methylene-5,6,7,8-tetrahydrofolate + NADPH + H(+) = 5-methyluridine(54) in tRNA + (6S)-5,6,7,8-tetrahydrofolate + NADP(+). In terms of biological role, catalyzes the folate-dependent formation of 5-methyl-uridine at position 54 (M-5-U54) in all tRNAs. The sequence is that of Methylenetetrahydrofolate--tRNA-(uracil-5-)-methyltransferase TrmFO from Bacillus cereus (strain ATCC 14579 / DSM 31 / CCUG 7414 / JCM 2152 / NBRC 15305 / NCIMB 9373 / NCTC 2599 / NRRL B-3711).